The chain runs to 135 residues: Large ribosomal subunit protein uL16 (135 aa).

The protein belongs to the universal ribosomal protein uL16 family. As to quaternary structure, part of the 50S ribosomal subunit.

Functionally, binds 23S rRNA and is also seen to make contacts with the A and possibly P site tRNAs. This chain is Large ribosomal subunit protein uL16, found in Desulfatibacillum aliphaticivorans.